A 364-amino-acid chain; its full sequence is Dihydroorotate dehydrogenase (quinone) (364 aa).

FMN is bound by residues 61-65 and Thr85; that span reads AGYDK. Residue Lys65 participates in substrate binding. 110–114 provides a ligand contact to substrate; that stretch reads NRLGF. FMN is bound by residues Asn139 and Asn170. Substrate is bound at residue Asn170. Residue Ser173 is the Nucleophile of the active site. A substrate-binding site is contributed by Asn175. FMN is bound by residues Lys215 and Ser243. 244-245 contacts substrate; that stretch reads NT. FMN is bound by residues Gly266, Gly295, and 316–317; that span reads YT.

Belongs to the dihydroorotate dehydrogenase family. Type 2 subfamily. Monomer. It depends on FMN as a cofactor.

The protein localises to the cell membrane. The catalysed reaction is (S)-dihydroorotate + a quinone = orotate + a quinol. Its pathway is pyrimidine metabolism; UMP biosynthesis via de novo pathway; orotate from (S)-dihydroorotate (quinone route): step 1/1. Catalyzes the conversion of dihydroorotate to orotate with quinone as electron acceptor. This is Dihydroorotate dehydrogenase (quinone) from Brucella anthropi (strain ATCC 49188 / DSM 6882 / CCUG 24695 / JCM 21032 / LMG 3331 / NBRC 15819 / NCTC 12168 / Alc 37) (Ochrobactrum anthropi).